We begin with the raw amino-acid sequence, 117 residues long: NADH-ubiquinone oxidoreductase chain 3 (117 aa).

Transmembrane regions (helical) follow at residues 1-21 (MLMLSIMATIIFIITIVVMML), 57-77 (FFLIAIIFLIFDVEIALLLPM), and 86-106 (LMNWTMTSFFFIFILLIGLYH).

Belongs to the complex I subunit 3 family.

The protein resides in the mitochondrion membrane. The enzyme catalyses a ubiquinone + NADH + 5 H(+)(in) = a ubiquinol + NAD(+) + 4 H(+)(out). Its function is as follows. Core subunit of the mitochondrial membrane respiratory chain NADH dehydrogenase (Complex I) that is believed to belong to the minimal assembly required for catalysis. Complex I functions in the transfer of electrons from NADH to the respiratory chain. The immediate electron acceptor for the enzyme is believed to be ubiquinone. This is NADH-ubiquinone oxidoreductase chain 3 (ND3) from Anopheles quadrimaculatus (Common malaria mosquito).